The following is a 102-amino-acid chain: NADH-quinone oxidoreductase subunit K 1 (102 aa).

3 helical membrane passes run 5-25 (LYEV…CVVA), 30-50 (VIMM…TFVG), and 62-82 (VFSL…LAMV).

The protein belongs to the complex I subunit 4L family. In terms of assembly, NDH-1 is composed of 14 different subunits. Subunits NuoA, H, J, K, L, M, N constitute the membrane sector of the complex.

It localises to the cell inner membrane. It carries out the reaction a quinone + NADH + 5 H(+)(in) = a quinol + NAD(+) + 4 H(+)(out). In terms of biological role, NDH-1 shuttles electrons from NADH, via FMN and iron-sulfur (Fe-S) centers, to quinones in the respiratory chain. The immediate electron acceptor for the enzyme in this species is believed to be ubiquinone. Couples the redox reaction to proton translocation (for every two electrons transferred, four hydrogen ions are translocated across the cytoplasmic membrane), and thus conserves the redox energy in a proton gradient. This is NADH-quinone oxidoreductase subunit K 1 from Geobacter sp. (strain M21).